The chain runs to 92 residues: Small ribosomal subunit protein uS19 (92 aa).

It belongs to the universal ribosomal protein uS19 family.

Its function is as follows. Protein S19 forms a complex with S13 that binds strongly to the 16S ribosomal RNA. This Rickettsia typhi (strain ATCC VR-144 / Wilmington) protein is Small ribosomal subunit protein uS19.